The following is an 88-amino-acid chain: MKSSIFFKLLLLVSLLVVIFRQSYAVADYCNRDADCKRVCLRPYACNLTRHLCMCHPNDVSSSKQHCIPEHKGFGEGGPPPQRLKLYR.

Residues 1-25 form the signal peptide; it reads MKSSIFFKLLLLVSLLVVIFRQSYA. Intrachain disulfides connect Cys30/Cys46, Cys36/Cys53, and Cys40/Cys55.

The protein belongs to the DEFL family.

It localises to the secreted. This is Putative defensin-like protein 256 from Arabidopsis thaliana (Mouse-ear cress).